A 123-amino-acid chain; its full sequence is Small ribosomal subunit protein uS12 (123 aa).

The interval 1-29 (MPTINQLIRKKRQSSASRKKSPALQKCPQ) is disordered. Positions 8 to 21 (IRKKRQSSASRKKS) are enriched in basic residues. Position 89 is a 3-methylthioaspartic acid (Asp89).

It belongs to the universal ribosomal protein uS12 family. Part of the 30S ribosomal subunit. Contacts proteins S8 and S17. May interact with IF1 in the 30S initiation complex.

Functionally, with S4 and S5 plays an important role in translational accuracy. Its function is as follows. Interacts with and stabilizes bases of the 16S rRNA that are involved in tRNA selection in the A site and with the mRNA backbone. Located at the interface of the 30S and 50S subunits, it traverses the body of the 30S subunit contacting proteins on the other side and probably holding the rRNA structure together. The combined cluster of proteins S8, S12 and S17 appears to hold together the shoulder and platform of the 30S subunit. This is Small ribosomal subunit protein uS12 from Chlamydia abortus (strain DSM 27085 / S26/3) (Chlamydophila abortus).